The sequence spans 171 residues: S-ribosylhomocysteine lyase (171 aa).

The Fe cation site is built by His-54, His-58, and Cys-128.

The protein belongs to the LuxS family. As to quaternary structure, homodimer. The cofactor is Fe cation.

The enzyme catalyses S-(5-deoxy-D-ribos-5-yl)-L-homocysteine = (S)-4,5-dihydroxypentane-2,3-dione + L-homocysteine. Its function is as follows. Involved in the synthesis of autoinducer 2 (AI-2) which is secreted by bacteria and is used to communicate both the cell density and the metabolic potential of the environment. The regulation of gene expression in response to changes in cell density is called quorum sensing. Catalyzes the transformation of S-ribosylhomocysteine (RHC) to homocysteine (HC) and 4,5-dihydroxy-2,3-pentadione (DPD). This chain is S-ribosylhomocysteine lyase, found in Salmonella agona (strain SL483).